Reading from the N-terminus, the 248-residue chain is PF03932 family protein CutC (248 aa).

The protein belongs to the CutC family. Homodimer.

The protein localises to the cytoplasm. This chain is PF03932 family protein CutC, found in Salmonella newport (strain SL254).